The chain runs to 616 residues: Homeodomain-interacting protein kinase 4 (616 aa).

The Protein kinase domain maps to 11-347 (YDIIEVLGKG…PSAALRHPFV (337 aa)). ATP is bound by residues 17–25 (LGKGTFGEV) and Lys40. Asp136 serves as the catalytic Proton acceptor. Residues 486–616 (HKARKPPAGS…SFLQHVTGHH (131 aa)) form a disordered region. Over residues 496–511 (KSDSNFSNLIRLSQVS) the composition is skewed to polar residues. Ser511 is modified (phosphoserine).

The protein belongs to the protein kinase superfamily. CMGC Ser/Thr protein kinase family. HIPK subfamily. In terms of processing, autophosphorylated.

Its subcellular location is the cytoplasm. The enzyme catalyses L-seryl-[protein] + ATP = O-phospho-L-seryl-[protein] + ADP + H(+). It carries out the reaction L-threonyl-[protein] + ATP = O-phospho-L-threonyl-[protein] + ADP + H(+). In terms of biological role, protein kinase that phosphorylates human TP53 at Ser-9, and thus induces TP53 repression of BIRC5 promoter. May act as a corepressor of transcription factors (Potential). In Homo sapiens (Human), this protein is Homeodomain-interacting protein kinase 4 (HIPK4).